Here is a 953-residue protein sequence, read N- to C-terminus: Pyruvate, phosphate dikinase, chloroplastic (953 aa).

A chloroplast-targeting transit peptide spans 1–77 (MMSSLSVEGM…VLNPVSPPVT (77 aa)). Residues 55–74 (PELRSSGLTPPRAVLNPVSP) form a disordered region. Residue T533 is modified to Phosphothreonine; by PDRP1. H535 functions as the Tele-phosphohistidine intermediate in the catalytic mechanism. Substrate-binding residues include R641, R698, E827, G848, T849, N850, and D851. Residue E827 coordinates Mg(2+). A Mg(2+)-binding site is contributed by D851. Catalysis depends on C913, which acts as the Proton donor.

Belongs to the PEP-utilizing enzyme family. As to quaternary structure, homotetramer. Mg(2+) serves as cofactor. Phosphorylation of Thr-533 in the dark inactivates the enzyme. Dephosphorylation upon light stimulation reactivates the enzyme.

The protein localises to the plastid. It is found in the chloroplast. It carries out the reaction pyruvate + phosphate + ATP = phosphoenolpyruvate + AMP + diphosphate + H(+). Its pathway is photosynthesis; C4 acid pathway. Activated by light-induced dephosphorylation. Inhibited by dark-induced phosphorylation. Both reactions are catalyzed by PDRP1. Inactivated by cold due to the dissociation of the homotetramer. Functionally, formation of phosphoenolpyruvate, which is the primary acceptor of CO(2) in C4 and some Crassulacean acid metabolism plants. The polypeptide is Pyruvate, phosphate dikinase, chloroplastic (Flaveria bidentis (Coastal plain yellowtops)).